The primary structure comprises 470 residues: Cysteine--tRNA ligase (470 aa).

Residue Cys-28 participates in Zn(2+) binding. The short motif at 30 to 40 is the 'HIGH' region element; the sequence is PTVYNYIHIGN. Zn(2+) contacts are provided by Cys-212, His-237, and Glu-241. The 'KMSKS' region motif lies at 271–275; it reads KMSKS. Residue Lys-274 coordinates ATP.

It belongs to the class-I aminoacyl-tRNA synthetase family. Monomer. Requires Zn(2+) as cofactor.

Its subcellular location is the cytoplasm. It catalyses the reaction tRNA(Cys) + L-cysteine + ATP = L-cysteinyl-tRNA(Cys) + AMP + diphosphate. This is Cysteine--tRNA ligase from Pediococcus pentosaceus (strain ATCC 25745 / CCUG 21536 / LMG 10740 / 183-1w).